The following is a 193-amino-acid chain: Ion-translocating oxidoreductase complex subunit A (193 aa).

6 helical membrane passes run 5 to 25, 39 to 59, 63 to 83, 102 to 122, 134 to 154, and 171 to 191; these read LLLF…FLGL, MGMG…AWLI, ILIP…VIAV, LLGI…VALL, ALYG…FAAI, and AIAL…SGLV.

Belongs to the NqrDE/RnfAE family. In terms of assembly, the complex is composed of six subunits: RsxA, RsxB, RsxC, RsxD, RsxE and RsxG.

The protein localises to the cell inner membrane. Part of a membrane-bound complex that couples electron transfer with translocation of ions across the membrane. Required to maintain the reduced state of SoxR. The chain is Ion-translocating oxidoreductase complex subunit A from Shigella flexneri serotype 5b (strain 8401).